A 361-amino-acid polypeptide reads, in one-letter code: D-malate dehydrogenase [decarboxylating] (361 aa).

Mn(2+) contacts are provided by aspartate 224, aspartate 248, and aspartate 252.

Belongs to the isocitrate and isopropylmalate dehydrogenases family. The cofactor is Mg(2+). Mn(2+) is required as a cofactor.

Its subcellular location is the cytoplasm. It carries out the reaction (R)-malate + NAD(+) = pyruvate + CO2 + NADH. Functionally, catalyzes the NAD(+)-dependent oxidative decarboxylation of D-malate into pyruvate. Is essential for aerobic growth on D-malate as the sole carbon source. But is not required for anaerobic D-malate utilization, although DmlA is expressed and active in those conditions. Appears to be not able to use L-tartrate as a substrate for dehydrogenation instead of D-malate. The polypeptide is D-malate dehydrogenase [decarboxylating] (dmlA) (Escherichia coli (strain K12)).